The chain runs to 651 residues: Sodium/potassium/calcium exchanger 2 (651 aa).

The Cytoplasmic portion of the chain corresponds to 1-38 (MALCKKTVGSVLEEWCLNEPLFGCKRHQNVRKKLRLIR). The chain crosses the membrane as a helical span at residues 39-59 (IIGLLVSVVAISTFSLSISAF). The Extracellular portion of the chain corresponds to 60–134 (FKMETHSTVL…DLFSLEERRK (75 aa)). Residues 92–123 (QNEGSTPDSPTSMKHEAEHDNATEEHSKGEYP) form a disordered region. Residues 93–103 (NEGSTPDSPTS) show a composition bias toward polar residues. Residues 104-122 (MKHEAEHDNATEEHSKGEY) are compositionally biased toward basic and acidic residues. Asn-112 carries an N-linked (GlcNAc...) asparagine glycan. The helical transmembrane segment at 135–155 (GAVILHVIGMIYMFIALAIVC) threads the bilayer. Topologically, residues 156–179 (DEFFVPSLTVITEKLSISDDVAGA) are cytoplasmic. One copy of the Alpha-1 repeat lies at 176–216 (VAGATFMAAGGSAPELFTSLIGVFISHSNVGIGTIVGSAVF). A helical membrane pass occupies residues 180–200 (TFMAAGGSAPELFTSLIGVFI). Residues 201–206 (SHSNVG) lie on the Extracellular side of the membrane. The chain crosses the membrane as a helical span at residues 207–227 (IGTIVGSAVFNILFVIGMCAL). The Cytoplasmic segment spans residues 228 to 245 (FSREILNLTWWPLFRDVS). The helical transmembrane segment at 246–266 (FYIVDLILLIIFFLDNLIMWW) threads the bilayer. The Extracellular portion of the chain corresponds to 267 to 459 (ESLTLLTAYF…SLAWPDTPRK (193 aa)). Basic and acidic residues predominate over residues 304 to 322 (ATTGDAEGKSPTAGDKDDQ). Positions 304–338 (ATTGDAEGKSPTAGDKDDQTLTTKPRLQRGGSSAS) are disordered. Residues 323 to 338 (TLTTKPRLQRGGSSAS) are compositionally biased toward polar residues. A helical membrane pass occupies residues 460 to 480 (QLTYLLVLPIVFPLWVSLPDV). At 481–487 (RNPRSRK) the chain is on the cytoplasmic side. The chain crosses the membrane as a helical span at residues 488-508 (FFPITFFGSISWIAFFSYLMV). Over 509–523 (WWAHQVGETIGISEE) the chain is Extracellular. The helical transmembrane segment at 524–544 (IMGLTILAAGTSIPDLITSVI) threads the bilayer. One copy of the Alpha-2 repeat lies at 531–562 (AAGTSIPDLITSVIVARKGLGDMAVSSSVGSN). Topologically, residues 545–562 (VARKGLGDMAVSSSVGSN) are cytoplasmic. Residues 563–583 (IFDITVGLPLPWLLYAVINNF) form a helical membrane-spanning segment. Residues 584–592 (SPVTVSSNG) lie on the Extracellular side of the membrane. The helical transmembrane segment at 593 to 613 (LFCAIVLLFIMLLFVILSIAF) threads the bilayer. The Cytoplasmic segment spans residues 614-620 (CKWRMNK). The chain crosses the membrane as a helical span at residues 621–641 (FLGFLMFGLYFVFLIVSVLLE). The Extracellular segment spans residues 642-651 (DKVIQCPVSI).

The protein belongs to the Ca(2+):cation antiporter (CaCA) (TC 2.A.19) family. SLC24A subfamily. Retinal cones. Found in the cone inner segment layer and in a subpopulation of ganglion cells.

The protein localises to the cell membrane. The enzyme catalyses Ca(2+)(out) + K(+)(out) + 4 Na(+)(in) = Ca(2+)(in) + K(+)(in) + 4 Na(+)(out). In terms of biological role, calcium, potassium:sodium antiporter that transports 1 Ca(2+) and 1 K(+) in exchange for 4 Na(+). Required for learming and memory by regulating neuronal Ca(2+), which is essential for the development of synaptic plasticity. The sequence is that of Sodium/potassium/calcium exchanger 2 (SLC24A2) from Gallus gallus (Chicken).